The sequence spans 173 residues: Translation initiation factor IF-3 (173 aa).

Belongs to the IF-3 family. In terms of assembly, monomer.

The protein resides in the cytoplasm. Its function is as follows. IF-3 binds to the 30S ribosomal subunit and shifts the equilibrium between 70S ribosomes and their 50S and 30S subunits in favor of the free subunits, thus enhancing the availability of 30S subunits on which protein synthesis initiation begins. In Caulobacter vibrioides (strain ATCC 19089 / CIP 103742 / CB 15) (Caulobacter crescentus), this protein is Translation initiation factor IF-3.